We begin with the raw amino-acid sequence, 272 residues long: GTP cyclohydrolase FolE2 (272 aa).

Belongs to the GTP cyclohydrolase IV family.

The enzyme catalyses GTP + H2O = 7,8-dihydroneopterin 3'-triphosphate + formate + H(+). The protein operates within cofactor biosynthesis; 7,8-dihydroneopterin triphosphate biosynthesis; 7,8-dihydroneopterin triphosphate from GTP: step 1/1. Its function is as follows. Converts GTP to 7,8-dihydroneopterin triphosphate. The polypeptide is GTP cyclohydrolase FolE2 (Polynucleobacter asymbioticus (strain DSM 18221 / CIP 109841 / QLW-P1DMWA-1) (Polynucleobacter necessarius subsp. asymbioticus)).